Reading from the N-terminus, the 105-residue chain is Large ribosomal subunit protein uL24 (105 aa).

It belongs to the universal ribosomal protein uL24 family. Part of the 50S ribosomal subunit.

Functionally, one of two assembly initiator proteins, it binds directly to the 5'-end of the 23S rRNA, where it nucleates assembly of the 50S subunit. One of the proteins that surrounds the polypeptide exit tunnel on the outside of the subunit. The protein is Large ribosomal subunit protein uL24 of Xylella fastidiosa (strain M23).